The chain runs to 666 residues: Neurexin-2-beta (666 aa).

Over residues 1–10 the composition is skewed to gly residues; that stretch reads MPPGGSGPGG. The tract at residues 1-30 is disordered; that stretch reads MPPGGSGPGGCPRRPPALAGPLPPPPPPPP. The N-terminal stretch at 1–50 is a signal peptide; sequence MPPGGSGPGGCPRRPPALAGPLPPPPPPPPPPLLPLLPLLLLLLLGAAEG. Residues 21–30 show a composition bias toward pro residues; the sequence is PLPPPPPPPP. Topologically, residues 51 to 590 are extracellular; sequence ARVSSSLSTT…EVIRESSSTT (540 aa). One can recognise a Laminin G-like domain in the interval 91–299; the sequence is TTYIFGKGGA…HLRLVGEGPS (209 aa). Ca(2+) contacts are provided by Asp-143 and Val-160. Asn-190 is a glycosylation site (N-linked (GlcNAc...) asparagine). Ca(2+) contacts are provided by Ile-242 and Asn-244. The disordered stretch occupies residues 327 to 346; the sequence is ATTTTRRGRSPTLRDSTTQN. Ser-354 carries an O-linked (Xyl...) (heparan sulfate) serine glycan. 2 disordered regions span residues 412 to 443 and 479 to 580; these read ATQD…CEEP and TLLS…PGAV. A helical membrane pass occupies residues 591–611; the sequence is GMVVGIVAAAALCILILLYAM. Residues 612 to 666 lie on the Cytoplasmic side of the membrane; it reads YKYRNRDEGSYQVDQSRNYISNSAQSNGAVVKEKAPAAPKTPSKAKKNKDKEYYV. Positions 633-666 are disordered; sequence NSAQSNGAVVKEKAPAAPKTPSKAKKNKDKEYYV.

It belongs to the neurexin family. In terms of assembly, interacts (via cytoplasmic C-terminal region) with CASK. Specific isoforms bind alpha-dystroglycan and neuroligins NLGN1, NLGN2 and NLGN3. Interacts with CBLN1, CBLN2 and, less avidly, with CBLN4. Interacts with CLSTN3. O-glycosylated; contains heparan sulfate. Heparan sulfate attachment is required for synapse development by mediating interactions with neuroligins.

It localises to the presynaptic cell membrane. In terms of biological role, neuronal cell surface protein that may be involved in cell recognition and cell adhesion. In Homo sapiens (Human), this protein is Neurexin-2-beta (NRXN2).